The chain runs to 155 residues: Myosin light chain alkali (155 aa).

EF-hand domains are found at residues 7-41 and 80-115; these read REVE…LNLN and GCYE…LGES.

In terms of assembly, myosin is a hexamer of 2 heavy chains and 4 light chains.

The sequence is that of Myosin light chain alkali (Mlc1) from Drosophila virilis (Fruit fly).